We begin with the raw amino-acid sequence, 209 residues long: Thiamine-phosphate synthase (209 aa).

Residues 37-41 and Asn69 contribute to the 4-amino-2-methyl-5-(diphosphooxymethyl)pyrimidine site; that span reads QLREK. Asp70 and Asp89 together coordinate Mg(2+). Ser108 lines the 4-amino-2-methyl-5-(diphosphooxymethyl)pyrimidine pocket. 134-136 provides a ligand contact to 2-[(2R,5Z)-2-carboxy-4-methylthiazol-5(2H)-ylidene]ethyl phosphate; sequence TNT. Lys137 is a binding site for 4-amino-2-methyl-5-(diphosphooxymethyl)pyrimidine. Residues Gly164 and 184 to 185 each bind 2-[(2R,5Z)-2-carboxy-4-methylthiazol-5(2H)-ylidene]ethyl phosphate; that span reads VS.

The protein belongs to the thiamine-phosphate synthase family. It depends on Mg(2+) as a cofactor.

It catalyses the reaction 2-[(2R,5Z)-2-carboxy-4-methylthiazol-5(2H)-ylidene]ethyl phosphate + 4-amino-2-methyl-5-(diphosphooxymethyl)pyrimidine + 2 H(+) = thiamine phosphate + CO2 + diphosphate. The catalysed reaction is 2-(2-carboxy-4-methylthiazol-5-yl)ethyl phosphate + 4-amino-2-methyl-5-(diphosphooxymethyl)pyrimidine + 2 H(+) = thiamine phosphate + CO2 + diphosphate. The enzyme catalyses 4-methyl-5-(2-phosphooxyethyl)-thiazole + 4-amino-2-methyl-5-(diphosphooxymethyl)pyrimidine + H(+) = thiamine phosphate + diphosphate. Its pathway is cofactor biosynthesis; thiamine diphosphate biosynthesis; thiamine phosphate from 4-amino-2-methyl-5-diphosphomethylpyrimidine and 4-methyl-5-(2-phosphoethyl)-thiazole: step 1/1. Functionally, condenses 4-methyl-5-(beta-hydroxyethyl)thiazole monophosphate (THZ-P) and 2-methyl-4-amino-5-hydroxymethyl pyrimidine pyrophosphate (HMP-PP) to form thiamine monophosphate (TMP). The polypeptide is Thiamine-phosphate synthase (Methanobrevibacter smithii (strain ATCC 35061 / DSM 861 / OCM 144 / PS)).